The following is a 1851-amino-acid chain: Chitin synthase (1851 aa).

A disordered region spans residues 1–21 (MQYHQHQHQFPGPGPSHTSVY). Residues 1-108 (MQYHQHQHQF…KDTLYNGFLQ (108 aa)) are Cytoplasmic-facing. A helical transmembrane segment spans residues 109-129 (VLKMITFVALFVTTLGSSILA). The Extracellular segment spans residues 130–168 (KLSLLVMAAGLGQAGHNISICPDKIPESPKNSVLISPKN). N146 carries an N-linked (GlcNAc...) asparagine glycan. Residues 169-189 (AAKWAWALLLAICIPELLCFA) traverse the membrane as a helical segment. Topologically, residues 190-208 (RSLHRSLFRKVRGPSFLQF) are cytoplasmic. A helical membrane pass occupies residues 209–229 (LLVFTVESVHAFGLGALVFAI). The Extracellular portion of the chain corresponds to 230 to 234 (MPRGM). Residues 235-255 (VITMLQLGNSLCLIPSLLLPL) form a helical membrane-spanning segment. The Cytoplasmic segment spans residues 256 to 261 (SRSRSR). A helical membrane pass occupies residues 262–282 (WLPLLLLLDGSAILAQSSAAI). The Extracellular segment spans residues 283 to 291 (WRGSIPLER). The chain crosses the membrane as a helical span at residues 292 to 312 (FGFVFLCTSLISIAWWQNFVH). Over 313-337 (PHSFLPATRFFAHYAAKLRECRSKT) the chain is Cytoplasmic. The chain crosses the membrane as a helical span at residues 338–358 (FVVLSPWKCLIFTFCMFQFVP). At 359-544 (PQIPFRELLQ…ELNQFTTAND (186 aa)) the chain is on the extracellular side. N-linked (GlcNAc...) asparagine glycans are attached at residues N385 and N435. Residues 432–522 (LFRNGTRRPP…DADEQEEEEE (91 aa)) are disordered. Basic and acidic residues predominate over residues 442 to 454 (KKEEVKKNKMDSK). Residues 455–465 (KKTKKLKKKKG) show a composition bias toward basic residues. Low complexity predominate over residues 466–478 (GNNNATSTNSSEK). 2 N-linked (GlcNAc...) asparagine glycosylation sites follow: N469 and N474. Acidic residues predominate over residues 513–522 (DADEQEEEEE). Residues 545–565 (ALWLVFVQAGSVLLCQLCAKF) form a helical membrane-spanning segment. Topologically, residues 566–573 (ACKVVMQR) are cytoplasmic. A helical membrane pass occupies residues 574-594 (VGLALPVVLSIPFGILFLAYS). Residues 595–631 (CRQKATNPCHLSEWMSKELFWQCPTRPFHWQRFFREQ) lie on the Extracellular side of the membrane. Residues 632 to 652 (PNLLWLCWWLSQCWITIHLWL) traverse the membrane as a helical segment. The Cytoplasmic segment spans residues 653 to 1124 (PRQERLAKSE…VSIWYIAYQL (472 aa)). The tract at residues 693–718 (SEDIDTEEEANEGGGEQEDGNSSTHT) is disordered. Acidic residues predominate over residues 696 to 711 (IDTEEEANEGGGEQED). Residues 1125 to 1145 (VMLFSSVLGPGTIFLMIVGAI) form a helical membrane-spanning segment. Residues 1146-1154 (SISFNIDTR) lie on the Extracellular side of the membrane. The chain crosses the membrane as a helical span at residues 1155–1175 (LALLIVTTPVLCFCVCCLTCG). At 1176–1179 (TETQ) the chain is on the cytoplasmic side. The chain crosses the membrane as a helical span at residues 1180-1200 (LLLAQVIGALFAMLMTAVIVG). Residues 1201–1209 (TSLQIQKDG) lie on the Extracellular side of the membrane. A helical transmembrane segment spans residues 1210–1230 (LLSPHSIFLFTVLGSWSFSAL). Residues 1231–1235 (LHPLE) are Cytoplasmic-facing. A helical membrane pass occupies residues 1236 to 1256 (FGCLLPCGLYFLAIPCMYMLL). Residues 1257 to 1461 (PVYSLCNLNT…QRGLNELRNT (205 aa)) lie on the Extracellular side of the membrane. Residue N1274 is glycosylated (N-linked (GlcNAc...) asparagine). Residues 1329–1383 (CADETVEVRKLDENFRKIERKLQSLERRTNGQGNNAEEEGKEEEETGKSEQERKE) are a coiled coil. The interval 1350-1402 (LQSLERRTNGQGNNAEEEGKEEEETGKSEQERKEGREEGKEEEGKMSKRKKEE) is disordered. The span at 1364–1373 (AEEEGKEEEE) shows a compositional bias: acidic residues. Residues 1374-1402 (TGKSEQERKEGREEGKEEEGKMSKRKKEE) are compositionally biased toward basic and acidic residues. The chain crosses the membrane as a helical span at residues 1462–1482 (CCSAFFMVNIVFIIVVLVLQL). Over 1483–1527 (QKDCLHIEWPLGPLVNQTRVQCGGGGGRDFEGEEWIMSRLQLEPM) the chain is Cytoplasmic. A helical membrane pass occupies residues 1528–1548 (GFVFIVFFLIILFIQFLAMLF). The Extracellular segment spans residues 1549-1851 (HRFGTFTHII…FLGTTNKRAK (303 aa)). The interval 1626–1658 (GKRQQNAQIPPRCEKGGNERGEESPTSLPAPPV) is disordered. Residues 1637–1648 (RCEKGGNERGEE) are compositionally biased toward basic and acidic residues. The N-linked (GlcNAc...) asparagine glycan is linked to N1660. A disordered region spans residues 1765–1851 (HSIFPSSSES…FLGTTNKRAK (87 aa)). The segment covering 1781–1822 (GGGRGRGREQERDKCLEGKKEKFRQRVEEGPARCHRLEELFG) has biased composition (basic and acidic residues). A compositionally biased stretch (basic residues) spans 1823 to 1834 (KSRKGGPQKRGK).

The protein belongs to the chitin synthase family. Class IV subfamily. Post-translationally, may require proteolytic cleavage for activation.

The protein resides in the cell membrane. The catalysed reaction is [(1-&gt;4)-N-acetyl-beta-D-glucosaminyl](n) + UDP-N-acetyl-alpha-D-glucosamine = [(1-&gt;4)-N-acetyl-beta-D-glucosaminyl](n+1) + UDP + H(+). Required for the synthesis of chitin. This chain is Chitin synthase, found in Meloidogyne artiellia (British root-knot nematode).